A 279-amino-acid polypeptide reads, in one-letter code: Energy-coupling factor transporter ATP-binding protein EcfA1 (279 aa).

Positions 5–240 (IELKKVTFNY…GDELLQLGLD (236 aa)) constitute an ABC transporter domain. Residue 40-47 (GHNGSGKS) coordinates ATP.

It belongs to the ABC transporter superfamily. Energy-coupling factor EcfA family. Forms a stable energy-coupling factor (ECF) transporter complex composed of 2 membrane-embedded substrate-binding proteins (S component), 2 ATP-binding proteins (A component) and 2 transmembrane proteins (T component).

It is found in the cell membrane. In terms of biological role, ATP-binding (A) component of a common energy-coupling factor (ECF) ABC-transporter complex. Unlike classic ABC transporters this ECF transporter provides the energy necessary to transport a number of different substrates. In Streptococcus pyogenes serotype M5 (strain Manfredo), this protein is Energy-coupling factor transporter ATP-binding protein EcfA1.